We begin with the raw amino-acid sequence, 354 residues long: MMNKNKKLMVMAGGTGGHVFPGLAVAKQLQQQGWQIRWLGTADRMEAELVPKHGIEIDFIQVKGLRGQGLMRLLKAPFQIVNAILQARRHLLTYQPDAVLGMGGYVSGPGGIAAWLLGIPVVLHEQNAVAGLTNQWLAKIARRVFQAFPGAFADASVVGNPVRQDVVQLAAPEQRFATRNGAIRILVMGGSQGARILNQTLPAVMAALGEGYEIRHQAGKNSQQDVAEAYAAAGVESAQVTEFIDDVADAYAWADLLICRSGALTVSEVSAAGVGAIFIPFMHKDRQQALNADHLVACGAAKMIEQPELSVEKLTQMVRELDRAQLLSMAQKARQAAKLDADKVVAQAIIAITE.

UDP-N-acetyl-alpha-D-glucosamine-binding positions include 15 to 17, N127, R163, S191, I244, 263 to 268, and Q288; these read TGG and ALTVSE.

It belongs to the glycosyltransferase 28 family. MurG subfamily.

Its subcellular location is the cell inner membrane. The catalysed reaction is di-trans,octa-cis-undecaprenyl diphospho-N-acetyl-alpha-D-muramoyl-L-alanyl-D-glutamyl-meso-2,6-diaminopimeloyl-D-alanyl-D-alanine + UDP-N-acetyl-alpha-D-glucosamine = di-trans,octa-cis-undecaprenyl diphospho-[N-acetyl-alpha-D-glucosaminyl-(1-&gt;4)]-N-acetyl-alpha-D-muramoyl-L-alanyl-D-glutamyl-meso-2,6-diaminopimeloyl-D-alanyl-D-alanine + UDP + H(+). It participates in cell wall biogenesis; peptidoglycan biosynthesis. Functionally, cell wall formation. Catalyzes the transfer of a GlcNAc subunit on undecaprenyl-pyrophosphoryl-MurNAc-pentapeptide (lipid intermediate I) to form undecaprenyl-pyrophosphoryl-MurNAc-(pentapeptide)GlcNAc (lipid intermediate II). This is UDP-N-acetylglucosamine--N-acetylmuramyl-(pentapeptide) pyrophosphoryl-undecaprenol N-acetylglucosamine transferase from Vibrio cholerae serotype O1 (strain ATCC 39315 / El Tor Inaba N16961).